Consider the following 440-residue polypeptide: Golgi-associated RAB2 interactor protein 2 (440 aa).

Belongs to the GARIN family. In terms of assembly, interacts with CALM1. In terms of tissue distribution, expressed in testis (at protein level).

The protein resides in the cell projection. The protein localises to the cilium. Its subcellular location is the flagellum. In terms of biological role, seems to play a role in sperm motility. The protein is Golgi-associated RAB2 interactor protein 2 of Mus musculus (Mouse).